A 771-amino-acid polypeptide reads, in one-letter code: Ribonucleoside-diphosphate reductase large subunit (771 aa).

One can recognise an ATP-cone domain in the interval 1-92; the sequence is MFVIKRNGYK…ISNLHKETKK (92 aa). ATP contacts are provided by residues 5-6, 11-17, T53, D57, and K88; these read KR and ENVMFDK. GDP contacts are provided by S202 and S217. DTTP is bound by residues 226 to 228, K243, and R256; that span reads DSI. Residue N427 participates in GDP binding. Residue N427 is the Proton acceptor of the active site. Catalysis depends on C429, which acts as the Cysteine radical intermediate. Residues E431 and 603–606 contribute to the GDP site; that span reads TAST. E431 serves as the catalytic Proton acceptor.

It belongs to the ribonucleoside diphosphate reductase large chain family. Interacts with RNR2/OPG047 subunit. Mg(2+) serves as cofactor.

It carries out the reaction a 2'-deoxyribonucleoside 5'-diphosphate + [thioredoxin]-disulfide + H2O = a ribonucleoside 5'-diphosphate + [thioredoxin]-dithiol. In terms of biological role, ribonucleoside-diphosphate reductase holoenzyme provides the precursors necessary for viral DNA synthesis. Allows virus growth in non-dividing cells. Catalyzes the biosynthesis of deoxyribonucleotides from the corresponding ribonucleotides. This Monkeypox virus protein is Ribonucleoside-diphosphate reductase large subunit (OPG080).